The chain runs to 230 residues: Endonuclease NucS (230 aa).

The protein belongs to the NucS endonuclease family.

Its subcellular location is the cytoplasm. Cleaves both 3' and 5' ssDNA extremities of branched DNA structures. The sequence is that of Endonuclease NucS from Corynebacterium glutamicum (strain R).